Reading from the N-terminus, the 1032-residue chain is Exportin-T (1032 aa).

This sequence belongs to the exportin family.

Its subcellular location is the nucleus. The protein resides in the cytoplasm. TRNA nucleus export receptor which facilitates tRNA translocation across the nuclear pore complex. Involved in pre-tRNA splicing, probably by affecting the interaction of pre-tRNA with splicing endonuclease. The polypeptide is Exportin-T (los1) (Aspergillus fumigatus (strain ATCC MYA-4609 / CBS 101355 / FGSC A1100 / Af293) (Neosartorya fumigata)).